Here is a 163-residue protein sequence, read N- to C-terminus: Cyclic pyranopterin monophosphate synthase (163 aa).

Substrate is bound by residues 75-77 (LCH) and 113-114 (ME). Aspartate 128 is an active-site residue.

Belongs to the MoaC family. Homohexamer; trimer of dimers.

The enzyme catalyses (8S)-3',8-cyclo-7,8-dihydroguanosine 5'-triphosphate = cyclic pyranopterin phosphate + diphosphate. The protein operates within cofactor biosynthesis; molybdopterin biosynthesis. Its function is as follows. Catalyzes the conversion of (8S)-3',8-cyclo-7,8-dihydroguanosine 5'-triphosphate to cyclic pyranopterin monophosphate (cPMP). This chain is Cyclic pyranopterin monophosphate synthase, found in Magnetococcus marinus (strain ATCC BAA-1437 / JCM 17883 / MC-1).